Consider the following 491-residue polypeptide: MSFTKFCRGCGQTLQSANESATGYIKPLKLSGIFSKGSVSNLLKKNLDEQAIFNNAFKNLNPQIKKHFPNTTSFPFHEKEIGRTDLLWCQRCHDLKFHSRIRPKELLQEPQTTLPDIISTVNNDKSTCLIIQVIDVTEVIFQDFVSATQYTHFPVFHLFTHADVLPPKKPYWLFPGLGISSKYAMLYTSHSFNLVDKLLGRINPLLCSRGHVYVVGEANSGKSTLLKTLAKRGNGVFNELLLDSFLPGTTQAIKGYPTQYFGSCFKQLSEGLIFDTPGYRGNLKSLLPWVDTKLLTSLVPKTRSRNKQLTSKPVQYRVRFGQSIILGGLVRVTPFEINEDGNHEVGKPIMFKKEDPSSTTIHFLFSTLKNKKTKGNTNNMKPLLIKLFTKLPAHITSITKLQSLENSTKNDNVPLVTHSPSPMHSSFTVSIKPTQLSENVFDPTSSGELVIHNFGFLSFSASRPMNLLVESVNPKAVSWRSAKPVVPKFNK.

This is an uncharacterized protein from Schizosaccharomyces pombe (strain 972 / ATCC 24843) (Fission yeast).